The sequence spans 392 residues: F-box protein At5g65850 (392 aa).

In terms of domain architecture, F-box spans 29-78 (TEKSVQIPVDIIIEILLRLPAKSIATCRCVSKLWISVICRQDFTELFLTR).

The sequence is that of F-box protein At5g65850 from Arabidopsis thaliana (Mouse-ear cress).